A 312-amino-acid polypeptide reads, in one-letter code: L-type lectin-like domain-containing protein C126.08c (312 aa).

A signal peptide spans 1-22; it reads MFFSVKNVFLLGIFGFVLGALA. Topologically, residues 23–280 are extracellular; that stretch reads ETSHLERLSL…QKKGSFKKRL (258 aa). Residues 24 to 248 enclose the L-type lectin-like domain; the sequence is TSHLERLSLE…EIASILSRTI (225 aa). The chain crosses the membrane as a helical span at residues 281–301; that stretch reads IILLLSLIVIFSIFALRSYQV. At 302-312 the chain is on the cytoplasmic side; it reads QQEKNRRTTVL.

It localises to the membrane. It is found in the endoplasmic reticulum. The protein resides in the golgi apparatus. Its subcellular location is the vacuole. This is L-type lectin-like domain-containing protein C126.08c from Schizosaccharomyces pombe (strain 972 / ATCC 24843) (Fission yeast).